Consider the following 564-residue polypeptide: 5-hydroxytryptamine receptor 1 (564 aa).

A disordered region spans residues 1–26; sequence MALSGQDWRRHQSHRQHRNHRTQGNH. Basic residues predominate over residues 11–23; that stretch reads HQSHRQHRNHRTQ. The helical transmembrane segment at 29-51 threads the bilayer; it reads LISTATLTLFVLFLSSWIAYAAG. 9 repeat units span residues 89–90, 91–92, 93–94, 95–96, 97–98, 99–100, 101–102, 103–104, and 105–106. Positions 89–106 are 9 X 2 AA tandem repeats of G-S; sequence GSGSGSGSGSGSGSGSGS. Residues 165 to 188 form a helical membrane-spanning segment; sequence VSIVLLIVILGTVVGNVLVCIAVC. At 189-198 the chain is on the cytoplasmic side; the sequence is MVRKLRRPCN. A helical membrane pass occupies residues 199–222; it reads YLLVSLALSDLCVALLVMPMALLY. The Extracellular portion of the chain corresponds to 223–236; it reads EVLEKWNFGPLLCD. Cysteine 235 and cysteine 314 are disulfide-bonded. The helical transmembrane segment at 237–258 threads the bilayer; that stretch reads IWVSFDVLCCTASILNLCAISV. Residues 238 to 247 are agonist binding; that stretch reads WVSFDVLCCT. The ergotamine site is built by aspartate 242 and threonine 247. Positions 259–261 match the DRY motif; important for ligand-induced conformation changes motif; it reads DRY. The Cytoplasmic portion of the chain corresponds to 259–278; the sequence is DRYLAITKPLEYGVKRTPRR. A helical transmembrane segment spans residues 279–302; it reads MMLCVGIVWLAAACISLPPLLILG. At 303–330 the chain is on the extracellular side; the sequence is NEHEDEEGQPICTVCQNFAYQIYATLGS. Residues 331–353 traverse the membrane as a helical segment; the sequence is FYIPLSVMLFVYYQIFRAARRIV. Topologically, residues 354–454 are cytoplasmic; the sequence is LEEKRAQTHL…QLAKEKKAST (101 aa). The tract at residues 367-396 is disordered; sequence LNGTGSPSAPQAPPLGHTELASSGNGQRHS. Over residues 386–396 the composition is skewed to polar residues; the sequence is LASSGNGQRHS. Residues 455–476 traverse the membrane as a helical segment; it reads TLGIIMSAFTVCWLPFFILALI. The Extracellular segment spans residues 477–487; the sequence is RPFETMHVPAS. A helical membrane pass occupies residues 488-510; the sequence is LSSLFLWLGYANSLLNPIIYATL. The short motif at 503 to 507 is the NPxxY motif; important for ligand-induced conformation changes and signaling element; that stretch reads NPIIY. The Cytoplasmic segment spans residues 511–564; that stretch reads NRDFRKPFQEILYFRCSSLNTMMRENYYQDQYGEPPSQRVMLGDERHGARESFL.

The protein belongs to the G-protein coupled receptor 1 family. 5-hydroxytryptamine receptor subfamily. In terms of tissue distribution, expressed predominantly in adult heads.

It is found in the cell membrane. Functionally, G-protein coupled receptor for 5-hydroxytryptamine (serotonin). Also functions as a receptor for various alkaloids. Ligand binding causes a conformation change that triggers signaling via guanine nucleotide-binding proteins (G proteins) and modulates the activity of down-stream effectors, such as adenylate cyclase. Signaling activates adenylate cyclase activity. This is 5-hydroxytryptamine receptor 1 (5-HT7) from Drosophila melanogaster (Fruit fly).